The sequence spans 197 residues: Imidazoleglycerol-phosphate dehydratase (197 aa).

It belongs to the imidazoleglycerol-phosphate dehydratase family.

It is found in the cytoplasm. It carries out the reaction D-erythro-1-(imidazol-4-yl)glycerol 3-phosphate = 3-(imidazol-4-yl)-2-oxopropyl phosphate + H2O. It participates in amino-acid biosynthesis; L-histidine biosynthesis; L-histidine from 5-phospho-alpha-D-ribose 1-diphosphate: step 6/9. The chain is Imidazoleglycerol-phosphate dehydratase from Pseudomonas aeruginosa (strain LESB58).